The primary structure comprises 1414 residues: DNA-directed RNA polymerase subunit beta' (1414 aa).

Residues C70, C72, C85, and C88 each coordinate Zn(2+). The Mg(2+) site is built by D460, D462, and D464. Residues C815, C889, C896, and C899 each contribute to the Zn(2+) site. The interval 1395-1414 is disordered; it reads EAEAQFADVSSTPDSDTDAS.

Belongs to the RNA polymerase beta' chain family. In terms of assembly, the RNAP catalytic core consists of 2 alpha, 1 beta, 1 beta' and 1 omega subunit. When a sigma factor is associated with the core the holoenzyme is formed, which can initiate transcription. The cofactor is Mg(2+). It depends on Zn(2+) as a cofactor.

It carries out the reaction RNA(n) + a ribonucleoside 5'-triphosphate = RNA(n+1) + diphosphate. Its function is as follows. DNA-dependent RNA polymerase catalyzes the transcription of DNA into RNA using the four ribonucleoside triphosphates as substrates. This chain is DNA-directed RNA polymerase subunit beta', found in Janthinobacterium sp. (strain Marseille) (Minibacterium massiliensis).